The following is a 315-amino-acid chain: MLSSLAGKLQGKTKFLIDVLKFYDARMLKSSSMSGIGKRGDPYLVKVVQGRSRKHSIASAKDNHRYGEDSWFISSTPKAEVMGVADGVGGWSELGIDSGLFASELMFWCANYAKRESFDGRTPLDLLIESYSEIKGKTDPIVGSSTACLVSLNRRDCTMHSANLGDSGFLVIRNGRMLHRSEEQVHDFNAPYQLTVVPNERFDNVYCDRPELADSTRLPLQEGDLVLLATDGLFDNVPESLIVKTLGKYQGVTREEDLQSAANSLVHMAKDLSISPNFESPFALKAKAFEVDYPGGGKPDDITVILATVAVPQND.

One can recognise a PPM-type phosphatase domain in the interval 54-309; that stretch reads KHSIASAKDN…DDITVILATV (256 aa). Asp86, Gly87, and Asp231 together coordinate Mn(2+).

The protein belongs to the PP2C family. The cofactor is Mg(2+). Mn(2+) serves as cofactor.

It carries out the reaction O-phospho-L-seryl-[protein] + H2O = L-seryl-[protein] + phosphate. The catalysed reaction is O-phospho-L-threonyl-[protein] + H2O = L-threonyl-[protein] + phosphate. The sequence is that of Protein phosphatase PTC7 homolog fig from Drosophila willistoni (Fruit fly).